The chain runs to 78 residues: Protein SlyX homolog (78 aa).

It belongs to the SlyX family.

This Photobacterium profundum (strain SS9) protein is Protein SlyX homolog.